The sequence spans 159 residues: Ribosomal RNA large subunit methyltransferase H (159 aa).

Residues leucine 76, glycine 108, and 127–132 contribute to the S-adenosyl-L-methionine site; that span reads FSKMTF.

The protein belongs to the RNA methyltransferase RlmH family. As to quaternary structure, homodimer.

The protein resides in the cytoplasm. The enzyme catalyses pseudouridine(1915) in 23S rRNA + S-adenosyl-L-methionine = N(3)-methylpseudouridine(1915) in 23S rRNA + S-adenosyl-L-homocysteine + H(+). Functionally, specifically methylates the pseudouridine at position 1915 (m3Psi1915) in 23S rRNA. This is Ribosomal RNA large subunit methyltransferase H from Staphylococcus carnosus (strain TM300).